Here is a 79-residue protein sequence, read N- to C-terminus: MGLKGAWCFPWCGCRRQRGTERGAGLSPAAPPDPSPAIAPTMAEGGVPSPGPGAYFSRKARLSFRHQLHDIASANDSTI.

Residues 20 to 52 (TERGAGLSPAAPPDPSPAIAPTMAEGGVPSPGP) are disordered.

This is an uncharacterized protein from Homo sapiens (Human).